A 239-amino-acid chain; its full sequence is Tetratricopeptide repeat protein 9B (239 aa).

Disordered regions lie at residues 1–57 and 99–126; these read MQRG…LGAA and QGAR…SEEQ. 2 positions are modified to phosphoserine: Ser7 and Ser27. Pro residues predominate over residues 16–31; sequence PEPPPRPPPALSPPGS. The stretch at 65–99 is one TPR 1 repeat; that stretch reads AVAFKAEGQRCYREKKFREAIGKYHRALLQLKAAQ. Over residues 106–116 the composition is skewed to pro residues; the sequence is LPAPAPGPTSS. One copy of the TPR 2 repeat lies at 171-204; sequence FKATYRAGIAFYHLGDYARALRYLQEARSREPTD.

The protein belongs to the TTC9 family.

This chain is Tetratricopeptide repeat protein 9B (TTC9B), found in Homo sapiens (Human).